The sequence spans 318 residues: NADH-ubiquinone oxidoreductase chain 1 (318 aa).

Transmembrane regions (helical) follow at residues 2–22 (FLMNILCLIIPILLAMAFLTL), 70–90 (MFILAPTLAFSLALSMWIPMP), 100–120 (LGVLFILALSSLAVYSILWSG), 136–156 (VAQTISYEVTLAIILLSIMML), 171–191 (HLWLIFPLWPLAMMWFISTLA), 231–251 (IIMMNALTTILFLGALHNPLF), 253–273 (ELFTVNFVTKTLLLTVTFLWV), and 294–314 (LPLTLALCMLHVSTPTMLAGI).

The protein belongs to the complex I subunit 1 family.

It is found in the mitochondrion inner membrane. It carries out the reaction a ubiquinone + NADH + 5 H(+)(in) = a ubiquinol + NAD(+) + 4 H(+)(out). In terms of biological role, core subunit of the mitochondrial membrane respiratory chain NADH dehydrogenase (Complex I) that is believed to belong to the minimal assembly required for catalysis. Complex I functions in the transfer of electrons from NADH to the respiratory chain. The immediate electron acceptor for the enzyme is believed to be ubiquinone. This chain is NADH-ubiquinone oxidoreductase chain 1 (MT-ND1), found in Priodontes maximus (Giant armadillo).